The sequence spans 218 residues: Capsid protein (218 aa).

Methionine 1 is modified (N-acetylmethionine; by host). Positions 1-10 (MDKSESTSAG) are enriched in low complexity. The disordered stretch occupies residues 1–30 (MDKSESTSAGRNRRRRPRRGSRSASSSSDA). Positions 11 to 21 (RNRRRRPRRGS) are enriched in basic residues.

This sequence belongs to the cucumovirus capsid protein family.

It localises to the virion. In terms of biological role, capsid protein. Probably binds RNA and plays a role in packaging. The polypeptide is Capsid protein (Cucumis sativus (Cucumber)).